The following is a 429-amino-acid chain: UDP-N-acetylglucosamine 1-carboxyvinyltransferase 2 (429 aa).

22–23 serves as a coordination point for phosphoenolpyruvate; it reads KN. Arg-93 is a binding site for UDP-N-acetyl-alpha-D-glucosamine. Cys-117 functions as the Proton donor in the catalytic mechanism. At Cys-117 the chain carries 2-(S-cysteinyl)pyruvic acid O-phosphothioketal. UDP-N-acetyl-alpha-D-glucosamine-binding positions include 122-126, Asp-305, and Ile-327; that span reads RPIDQ.

It belongs to the EPSP synthase family. MurA subfamily.

It is found in the cytoplasm. It catalyses the reaction phosphoenolpyruvate + UDP-N-acetyl-alpha-D-glucosamine = UDP-N-acetyl-3-O-(1-carboxyvinyl)-alpha-D-glucosamine + phosphate. It participates in cell wall biogenesis; peptidoglycan biosynthesis. Its function is as follows. Cell wall formation. Adds enolpyruvyl to UDP-N-acetylglucosamine. This chain is UDP-N-acetylglucosamine 1-carboxyvinyltransferase 2, found in Bacillus cereus (strain ATCC 14579 / DSM 31 / CCUG 7414 / JCM 2152 / NBRC 15305 / NCIMB 9373 / NCTC 2599 / NRRL B-3711).